A 137-amino-acid polypeptide reads, in one-letter code: Proline-rich protein 13 (137 aa).

Disordered regions lie at residues 26–54 (PPPL…PCRP) and 94–137 (VGPG…SDSD). The segment covering 103 to 124 (KTRKKMKKAHKKSHKHHKHGKH) has biased composition (basic residues). Residues 125 to 137 (SSSSSSSSSSDSD) are compositionally biased toward low complexity.

The protein localises to the nucleus. Negatively regulates TSP1 expression at the level of transcription. This down-regulation was shown to reduce taxane-induced apoptosis. The chain is Proline-rich protein 13 (Prr13) from Mus musculus (Mouse).